The primary structure comprises 513 residues: ATP synthase subunit alpha (513 aa).

169–176 lines the ATP pocket; the sequence is GDRQTGKT.

Belongs to the ATPase alpha/beta chains family. F-type ATPases have 2 components, CF(1) - the catalytic core - and CF(0) - the membrane proton channel. CF(1) has five subunits: alpha(3), beta(3), gamma(1), delta(1), epsilon(1). CF(0) has three main subunits: a(1), b(2) and c(9-12). The alpha and beta chains form an alternating ring which encloses part of the gamma chain. CF(1) is attached to CF(0) by a central stalk formed by the gamma and epsilon chains, while a peripheral stalk is formed by the delta and b chains.

It localises to the cell inner membrane. The catalysed reaction is ATP + H2O + 4 H(+)(in) = ADP + phosphate + 5 H(+)(out). Its function is as follows. Produces ATP from ADP in the presence of a proton gradient across the membrane. The alpha chain is a regulatory subunit. The polypeptide is ATP synthase subunit alpha (Haemophilus influenzae (strain PittGG)).